We begin with the raw amino-acid sequence, 4146 residues long: DNA-dependent protein kinase catalytic subunit (4146 aa).

4 HEAT repeats span residues 308–343 (DDYQSLFEVISKWCGHTNGEMKKLAFAALDSFLKQI), 925–962 (VIYLDMFLPHITELALSTSDRQTKVAACELLHSIVAFM), 1026–1062 (QDTVALLEAILTGIVDPVDSTLRDFCGQCIQEFLRWS), and 1075–1111 (PVNTTSLFKRLYSLALHPNAFKRLGAALAFNNIYRDF). TPR repeat units lie at residues 1745–1778 (PMKSDEFPKGTLKFNNYVDCIKKFLDALELSQSP) and 1974–2007 (VFSELKFYQGFLFTEKKEKNLLIFENLIDLQRNY). Position 2075 is a phosphoserine; by autocatalysis (serine 2075). Threonine 2631 carries the post-translational modification Phosphothreonine; by autocatalysis. Position 2634 is a phosphoserine; by autocatalysis (serine 2634). Phosphothreonine; by autocatalysis occurs at positions 2659 and 2668. In terms of domain architecture, FAT spans 2873-3556 (FIACVQDMCY…VYPFMVSGES (684 aa)). Residues 3739-4071 (FDERVSVMAS…IHCAKRKLDG (333 aa)) enclose the PI3K/PI4K catalytic domain. The G-loop stretch occupies residues 3745–3751 (VMASIRK). Residues 3937-3945 (GIGDRHLSN) form a catalytic loop region. The segment at 3957–3982 (GIDFGHAFGTATQFLPVPELMPFRLT) is activation loop. Positions 4114-4146 (DGLTEETQVQCLIDQATDPNILGRVWKGWEPWI) constitute an FATC domain.

This sequence belongs to the PI3/PI4-kinase family. In terms of assembly, DNA-PK is a heterotrimer of prkdc and the Ku dimer (composed of xrcc6/Ku70 and xrcc5/Ku86). Component of the core long-range non-homologous end joining (NHEJ) complex (also named DNA-PK complex) composed of prkdc, lig4, xrcc4, xrcc6/ku70, xrcc5/ku86 and nhej1/xlf. Additional component of the NHEJ complex includes paxx. Following autophosphorylation, prkdc dissociates from DNA. Autophosphorylated at two clusters, the T2609 cluster and the S2056 cluster. Autophosphorylated on Ser-2075, Thr-2631, Thr-2659 and Thr-2668. Ser-2075 and Thr-2668 are DNA damage-inducible phosphorylation sites (inducible with ionizing radiation, IR) dephosphorylated by PPP5C. Autophosphorylation induces a conformational change that leads to remodeling of the DNA-PK complex, requisite for efficient end processing and DNA repair. Autophosphorylation in trans within DNA-PK complexes loaded on DNA ends leads to the dissociation of PRKDC from DNA and the transition into the short-range NHEJ complex. Autophosphorylation of the T2609 cluster is required for hematopoietic development and protein synthesis in erythrocytes precursors.

The protein localises to the nucleus. Its subcellular location is the nucleolus. It carries out the reaction L-seryl-[protein] + ATP = O-phospho-L-seryl-[protein] + ADP + H(+). The catalysed reaction is L-threonyl-[protein] + ATP = O-phospho-L-threonyl-[protein] + ADP + H(+). In terms of biological role, serine/threonine-protein kinase that acts as a molecular sensor for DNA damage. Involved in DNA nonhomologous end joining (NHEJ) required for double-strand break (DSB) repair and V(D)J recombination. Must be bound to DNA to express its catalytic properties. Promotes processing of hairpin DNA structures in V(D)J recombination by activation of the hairpin endonuclease artemis (DCLRE1C). Recruited by XRCC5 and XRCC6 to DNA ends and is required to (1) protect and align broken ends of DNA, thereby preventing their degradation, (2) and sequester the DSB for repair by NHEJ. Acts as a scaffold protein to aid the localization of DNA repair proteins to the site of damage. The assembly of the DNA-PK complex at DNA ends is also required for the NHEJ ligation step. Found at the ends of chromosomes, suggesting a further role in the maintenance of telomeric stability and the prevention of chromosomal end fusion. As part of the DNA-PK complex, involved in the early steps of ribosome assembly by promoting the processing of precursor rRNA into mature 18S rRNA in the small-subunit processome. Recognizes the substrate consensus sequence [ST]-Q. Phosphorylates 'Ser-139' of histone variant H2AX, thereby regulating DNA damage response mechanism. The polypeptide is DNA-dependent protein kinase catalytic subunit (prkdc) (Xenopus laevis (African clawed frog)).